The primary structure comprises 231 residues: MIDAEFKTALEQFGLELDEPLGMSLQQYAQSLWRYNEQINLTRHTTWDLFVTRDLRDCLQLAQLIQPGEEVLDMGSGNGVPGIPLAMLRPDIDVALAESVGKRAKVLDELVTELNLPVPVYAARGEDLLEDFRFTTIVSRAVGSLLKFCRWVEPHWSQFDRLLLIKGPKWVDERGEARHHGVLKGLELRVVATYPLGSVAPELAEAEEGDSPEAADASRGVILELTKKNKG.

S-adenosyl-L-methionine is bound by residues glycine 75, 125–126 (GE), and arginine 140. Residues 204–213 (AEAEEGDSPE) show a composition bias toward acidic residues. The tract at residues 204 to 231 (AEAEEGDSPEAADASRGVILELTKKNKG) is disordered.

This sequence belongs to the methyltransferase superfamily. RNA methyltransferase RsmG family.

Its subcellular location is the cytoplasm. Functionally, specifically methylates the N7 position of a guanine in 16S rRNA. The polypeptide is Ribosomal RNA small subunit methyltransferase G (Rhodopirellula baltica (strain DSM 10527 / NCIMB 13988 / SH1)).